Reading from the N-terminus, the 454-residue chain is Guanine deaminase (454 aa).

Zn(2+) contacts are provided by histidine 82 and histidine 84. Substrate contacts are provided by residues histidine 84 to glutamine 87, arginine 213 to phenylalanine 214, histidine 240 to glutamate 243, and aspartate 330. The Zn(2+) site is built by histidine 240 and aspartate 330. At serine 453 the chain carries Phosphoserine.

It belongs to the metallo-dependent hydrolases superfamily. ATZ/TRZ family. In terms of assembly, homodimer. Requires Zn(2+) as cofactor.

The enzyme catalyses guanine + H2O + H(+) = xanthine + NH4(+). It participates in purine metabolism; guanine degradation; xanthine from guanine: step 1/1. Its function is as follows. Catalyzes the hydrolytic deamination of guanine, producing xanthine and ammonia. The sequence is that of Guanine deaminase from Homo sapiens (Human).